The primary structure comprises 765 residues: E3 ubiquitin-protein ligase SlrP (765 aa).

The interval 1–453 is interaction with target proteins; that stretch reads MFNITNIQST…YQGPRVLFAM (453 aa). LRR repeat units lie at residues 200 to 219, 221 to 242, 243 to 262, 263 to 284, 285 to 305, 306 to 325, 326 to 346, 347 to 368, 369 to 389, and 390 to 410; these read QITT…ENLQ, NIKT…LPDT, IQEM…RLPS, ALQS…LPEE, LRYL…LPSE, ITHL…TLPP, GLKT…SLPP, ELQV…LPPT, ITTL…LPAA, and LQIM…LPHF. Residues 454 to 461 form a linker region; the sequence is GDFSIVRV. The tract at residues 462–765 is E3 ubiquitin-protein ligase catalytic domain; that stretch reads TRPLHQAVQG…VSSLMSAYWR (304 aa). One can recognise an NEL domain in the interval 464 to 758; sequence PLHQAVQGWL…NILLKKEVSS (295 aa). The active-site Glycyl thioester intermediate is the C546.

Belongs to the LRR-containing bacterial E3 ligase family. Interacts with host TXN. In terms of processing, ubiquitinated in the presence of host E1 ubiquitin-activating enzyme, E2 ubiquitin-conjugating enzyme and ubiquitin.

The protein localises to the secreted. It is found in the host cytoplasm. It carries out the reaction S-ubiquitinyl-[E2 ubiquitin-conjugating enzyme]-L-cysteine + [acceptor protein]-L-lysine = [E2 ubiquitin-conjugating enzyme]-L-cysteine + N(6)-ubiquitinyl-[acceptor protein]-L-lysine.. Functionally, effector proteins function to alter host cell physiology and promote bacterial survival in host tissues. This protein is an E3 ubiquitin ligase that interferes with host's ubiquitination pathway. Can ubiquitinate both ubiquitin and host TXN (thioredoxin). Leads to significant decrease of thioredoxin activity and increase of host cell death. The polypeptide is E3 ubiquitin-protein ligase SlrP (slrP) (Salmonella typhimurium (strain 14028s / SGSC 2262)).